The sequence spans 356 residues: cGAMP-activated phospholipase (356 aa).

In terms of domain architecture, PNPLA spans 15-206 (LSLNGGGARG…VANNPSYIGL (192 aa)). The GXGXXG motif lies at 19 to 24 (GGGARG). The short motif at 58 to 62 (GTSIG) is the GXSXG element. The Nucleophile role is filled by S60. D193 acts as the Proton acceptor in catalysis. The DGA/G signature appears at 193-195 (DGG).

Belongs to the patatin family.

It carries out the reaction a 1,2-diacyl-sn-glycero-3-phosphocholine + H2O = a 2-acyl-sn-glycero-3-phosphocholine + a fatty acid + H(+). It catalyses the reaction 1,2-di-(9Z-octadecenoyl)-sn-glycero-3-phosphoethanolamine + 2 H2O = sn-glycero-3-phosphoethanolamine + 2 (9Z)-octadecenoate + 2 H(+). With respect to regulation, phospholipase activity is specifically activated upon 3',3'-cGAMP binding, which is produced by the cognate cyclic nucleotide synthase encoded in the same operon. In terms of biological role, effector phospholipase of a CBASS antiviral system. CBASS (cyclic oligonucleotide-based antiphage signaling system) provides immunity against bacteriophages. The CD-NTase protein (DncV) synthesizes cyclic nucleotides in response to infection; these serve as specific second messenger signals. The signals activate a diverse range of effectors, leading to bacterial cell death and thus abortive phage infection. A type II-A(GA) CBASS system. Functionally, phospholipase that is activated upon binding to the cyclic dinucleotide (CDN) second messenger 3',3'-cyclic GMP-AMP (cGAMP). Degrades phospholipids in the cell membrane. Protects E.coli against phage infection. When capV and dncV are introduced in E.coli MG1655 there is 1000-fold protection against phage P1; protection against other phage (T2, T4, T5, T6 and lambda-vir) requires the 2 subsequent genes (cap2 and cap3). Upon P1 phage infection the activating molecule is produced between 30 and 40 minutes. Activation leads to bacterial cell lysis and death, which occurs before the phage has finished its replication cycle, thus protecting non-infected bacteria by aborting the phage infection and preventing its propagation. In another paper the capV-dncV-cap2-cap3 operon gives 10(4)-10(5)-fold protection against phages lambda, T2, T4 and T6, about 1000-fold protection against P1 and 10-fold protection against T5. The polypeptide is cGAMP-activated phospholipase (Escherichia coli (strain TW11681)).